The chain runs to 376 residues: Nuclear egress protein 1 (376 aa).

Ser-19 carries the phosphoserine modification. The disordered stretch occupies residues 22 to 57 (RKRRQRELASKVASTVNGATSANNHGEPPSPADARP). Over residues 33-45 (VASTVNGATSANN) the composition is skewed to polar residues. The CCCH-type zinc-finger motif lies at 106–211 (CLDISPYGNE…HVIFENPDVH (106 aa)). A disordered region spans residues 316 to 376 (VVSTNGCGPS…PLFLNSIRAP (61 aa)). Residues 317–332 (VSTNGCGPSSSSQSTP) are compositionally biased toward polar residues.

Belongs to the herpesviridae NEC1 protein family. In terms of assembly, forms a heterohexameric complex with NEC2. Interacts with capsid vertex specific component 2/CVC2; this interaction directs the capsid to the host inner nuclear membrane to initiate budding. In terms of processing, phosphorylated at serine residues in the N-terminus. This phosphorylation regulates the localization within the inner nuclear membrane. Phosphorylation by viral kinase UL97 at Ser-19 plays an important role for correct viral nuclear egress complex (NEC) localization.

Its subcellular location is the host nucleus inner membrane. Plays an essential role in virion nuclear egress, the first step of virion release from infected cell. Within the host nucleus, NEC1 interacts with the newly formed capsid through the vertexes and directs it to the inner nuclear membrane by associating with NEC2. Induces the budding of the capsid at the inner nuclear membrane as well as its envelopment into the perinuclear space. There, the NEC1/NEC2 complex promotes the fusion of the enveloped capsid with the outer nuclear membrane and the subsequent release of the viral capsid into the cytoplasm where it will reach the secondary budding sites in the host Golgi or trans-Golgi network. This chain is Nuclear egress protein 1, found in Homo sapiens (Human).